A 310-amino-acid chain; its full sequence is Methionyl-tRNA formyltransferase (310 aa).

109 to 112 contributes to the (6S)-5,6,7,8-tetrahydrofolate binding site; that stretch reads SLLP.

The protein belongs to the Fmt family.

It catalyses the reaction L-methionyl-tRNA(fMet) + (6R)-10-formyltetrahydrofolate = N-formyl-L-methionyl-tRNA(fMet) + (6S)-5,6,7,8-tetrahydrofolate + H(+). Attaches a formyl group to the free amino group of methionyl-tRNA(fMet). The formyl group appears to play a dual role in the initiator identity of N-formylmethionyl-tRNA by promoting its recognition by IF2 and preventing the misappropriation of this tRNA by the elongation apparatus. The chain is Methionyl-tRNA formyltransferase from Pseudomonas putida (strain ATCC 700007 / DSM 6899 / JCM 31910 / BCRC 17059 / LMG 24140 / F1).